The chain runs to 275 residues: 2-dehydro-3-deoxyphosphooctonate aldolase (275 aa).

The protein belongs to the KdsA family.

It localises to the cytoplasm. The catalysed reaction is D-arabinose 5-phosphate + phosphoenolpyruvate + H2O = 3-deoxy-alpha-D-manno-2-octulosonate-8-phosphate + phosphate. The protein operates within carbohydrate biosynthesis; 3-deoxy-D-manno-octulosonate biosynthesis; 3-deoxy-D-manno-octulosonate from D-ribulose 5-phosphate: step 2/3. It functions in the pathway bacterial outer membrane biogenesis; lipopolysaccharide biosynthesis. The chain is 2-dehydro-3-deoxyphosphooctonate aldolase from Francisella tularensis subsp. mediasiatica (strain FSC147).